Here is a 223-residue protein sequence, read N- to C-terminus: Large ribosomal subunit protein uL3 (223 aa).

The segment at 137-157 (GRASHGNSRSHNVPGSIGMAQ) is disordered. Position 157 is an N5-methylglutamine (Gln157).

It belongs to the universal ribosomal protein uL3 family. In terms of assembly, part of the 50S ribosomal subunit. Forms a cluster with proteins L14 and L19. Methylated by PrmB.

One of the primary rRNA binding proteins, it binds directly near the 3'-end of the 23S rRNA, where it nucleates assembly of the 50S subunit. This chain is Large ribosomal subunit protein uL3, found in Burkholderia pseudomallei (strain 1106a).